Consider the following 294-residue polypeptide: Urease accessory protein UreD 1 (294 aa).

Positions 1–20 (MALSLDDLPEKPAPAEPVSA) are disordered.

Belongs to the UreD family. In terms of assembly, ureD, UreF and UreG form a complex that acts as a GTP-hydrolysis-dependent molecular chaperone, activating the urease apoprotein by helping to assemble the nickel containing metallocenter of UreC. The UreE protein probably delivers the nickel.

It localises to the cytoplasm. In terms of biological role, required for maturation of urease via the functional incorporation of the urease nickel metallocenter. The chain is Urease accessory protein UreD 1 from Methylorubrum populi (strain ATCC BAA-705 / NCIMB 13946 / BJ001) (Methylobacterium populi).